A 581-amino-acid polypeptide reads, in one-letter code: Potassium-transporting ATPase potassium-binding subunit (581 aa).

12 helical membrane-spanning segments follow: residues 2–22 (LQGW…TPFF), 74–94 (AVIA…PLNP), 135–155 (GLGY…IAFI), 177–197 (ILLP…VPET), 255–275 (LVQL…YGVF), 284–304 (LIYL…AIGE), 332–352 (WAQS…AVIA), 357–377 (LMPN…VFGG), 381–401 (GTAY…LMVG), 421–441 (FLIL…ALAF), 501–521 (LSAC…LLLL), and 550–570 (AGVI…LGPI).

It belongs to the KdpA family. As to quaternary structure, the system is composed of three essential subunits: KdpA, KdpB and KdpC.

The protein localises to the cell inner membrane. In terms of biological role, part of the high-affinity ATP-driven potassium transport (or Kdp) system, which catalyzes the hydrolysis of ATP coupled with the electrogenic transport of potassium into the cytoplasm. This subunit binds the periplasmic potassium ions and delivers the ions to the membrane domain of KdpB through an intramembrane tunnel. This Microcystis aeruginosa (strain NIES-843 / IAM M-2473) protein is Potassium-transporting ATPase potassium-binding subunit.